Consider the following 555-residue polypeptide: Neutral amino acid transporter B(0) (555 aa).

Methionine 1 is subject to N-acetylmethionine. At 1–52 (MAVDPPKADPKGVVAVDPTANCGSGLKSREDQGAKAGGCCSSRDQVCRCLRA) the chain is on the cytoplasmic side. The helical transmembrane segment at 53 to 82 (NLLVLLTVAAAVAGVVLGLGVSAAGGAEAL) threads the bilayer. The Extracellular segment spans residues 83–95 (GHARFTAFAFPGE). A helical transmembrane segment spans residues 96-117 (LLLRLLEMIILPLVVCSLIGGA). Topologically, residues 118 to 131 (ASLDPSALGRLGAW) are cytoplasmic. Residues 132 to 154 (ALLFFLVTTLLSSALGVALALAL) traverse the membrane as a helical segment. Residues 155–239 (KPGAAFAAIN…SNATMDQPHC (85 aa)) are Extracellular-facing. N-linked (GlcNAc...) asparagine glycosylation is found at asparagine 164 and asparagine 231. Residues 240-262 (EMKMNILGLVVFAIVFGVALRKL) form a helical membrane-spanning segment. The Cytoplasmic portion of the chain corresponds to 263 to 271 (GPEGELLIR). A helical membrane pass occupies residues 272 to 299 (FFNSFNDATMVLVSWIMWYAPIGILFLV). Residues 300–320 (AGKIVEMKDIRQLFIGLGKYI) are Extracellular-facing. Residues 321–342 (VCCLLGHAIHGLLVLPLIYFLF) traverse the membrane as a helical segment. Over 343–347 (TRKNP) the chain is Cytoplasmic. The segment at residues 348-378 (YRFLWGIVTPLATAFGTSSSSATLPLMMKCV) is an intramembrane region (discontinuously helical). Residues 379–387 (EEKNGVAKH) lie on the Cytoplasmic side of the membrane. The helical transmembrane segment at 388 to 414 (ISRFILPIGATVNMDGAALFQCVAAVF) threads the bilayer. Glycine 396, threonine 398, and asparagine 400 together coordinate Na(+). The Extracellular portion of the chain corresponds to 415 to 427 (IAQLNGMSLDFVK). Residues 428 to 461 (IITILVTATASSVGAAGIPAGGVLTLAIILEAIS) constitute an intramembrane region (discontinuously helical). Residues 462 to 474 (LPVKDISLILAVD) lie on the Extracellular side of the membrane. Residues 475–496 (WLVDRSCTVLNVEGDAFGAGLL) traverse the membrane as a helical segment. Asparagine 485 and aspartate 489 together coordinate Na(+). The Cytoplasmic segment spans residues 497–555 (QSYVDRTKMPSSEPELIQVKNDVSLKPLPLATEEGNPLLKQCREPSGDSSATCEKESVM). Phosphoserine is present on residues serine 507, serine 508, serine 520, serine 545, and serine 553. The disordered stretch occupies residues 534–555 (LLKQCREPSGDSSATCEKESVM).

The protein belongs to the dicarboxylate/amino acid:cation symporter (DAACS) (TC 2.A.23) family. As to quaternary structure, homotrimer.

The protein localises to the cell membrane. It is found in the melanosome. It catalyses the reaction L-glutamine(out) + L-serine(in) + Na(+)(out) = L-glutamine(in) + L-serine(out) + Na(+)(in). The catalysed reaction is L-glutamine(in) + L-serine(out) + Na(+)(out) = L-glutamine(out) + L-serine(in) + Na(+)(in). It carries out the reaction L-threonine(in) + L-glutamine(out) + Na(+)(out) = L-threonine(out) + L-glutamine(in) + Na(+)(in). The enzyme catalyses L-threonine(out) + L-glutamine(in) + Na(+)(out) = L-threonine(in) + L-glutamine(out) + Na(+)(in). It catalyses the reaction L-asparagine(in) + L-glutamine(out) + Na(+)(out) = L-asparagine(out) + L-glutamine(in) + Na(+)(in). The catalysed reaction is L-asparagine(out) + L-glutamine(in) + Na(+)(out) = L-asparagine(in) + L-glutamine(out) + Na(+)(in). It carries out the reaction L-glutamine(in) + L-alanine(out) + Na(+)(out) = L-glutamine(out) + L-alanine(in) + Na(+)(in). The enzyme catalyses L-valine(out) + L-glutamine(in) + Na(+)(out) = L-valine(in) + L-glutamine(out) + Na(+)(in). It catalyses the reaction L-glutamine(in) + L-methionine(out) + Na(+)(out) = L-glutamine(out) + L-methionine(in) + Na(+)(in). The catalysed reaction is L-glutamine(in) + L-glutamate(out) + Na(+)(out) + H(+)(out) = L-glutamine(out) + L-glutamate(in) + Na(+)(in) + H(+)(in). It carries out the reaction D-serine(in) + L-glutamine(out) + Na(+)(out) = D-serine(out) + L-glutamine(in) + Na(+)(in). The enzyme catalyses D-serine(in) + L-alanine(out) + Na(+)(out) = D-serine(out) + L-alanine(in) + Na(+)(in). It catalyses the reaction nitrate(in) = nitrate(out). The catalysed reaction is iodide(out) = iodide(in). It carries out the reaction thiocyanate(in) = thiocyanate(out). Its activity is regulated as follows. Down-regulated at acidic pH. In terms of biological role, sodium-coupled antiporter of neutral amino acids. In a tri-substrate transport cycle, exchanges neutral amino acids between the extracellular and intracellular compartments, coupled to the inward cotransport of at least one sodium ion. The preferred substrate is the essential amino acid L-glutamine, a precursor for biosynthesis of proteins, nucleotides and amine sugars as well as an alternative fuel for mitochondrial oxidative phosphorylation. Exchanges L-glutamine with other neutral amino acids such as L-serine, L-threonine and L-asparagine in a bidirectional way. Provides L-glutamine to proliferating stem and activated cells driving the metabolic switch toward cell differentiation. The transport cycle is usually pH-independent, with the exception of L-glutamate. Transports extracellular L-glutamate coupled to the cotransport of one proton and one sodium ion in exchange for intracellular L-glutamine counter-ion. May provide for L-glutamate uptake in glial cells regulating glutamine/glutamate cycle in the nervous system. Can transport D-amino acids. Mediates D-serine release from the retinal glia potentially affecting NMDA receptor function in retinal neurons. Displays sodium- and amino acid-dependent but uncoupled channel-like anion conductance with a preference SCN(-) &gt;&gt; NO3(-) &gt; I(-) &gt; Cl(-). Through binding of the fusogenic protein syncytin-1/ERVW-1 may mediate trophoblasts syncytialization, the spontaneous fusion of their plasma membranes, an essential process in placental development. In Rattus norvegicus (Rat), this protein is Neutral amino acid transporter B(0) (Slc1a5).